An 86-amino-acid chain; its full sequence is Progonadoliberin IIA (86 aa).

A signal peptide spans 1–24; sequence MVHICRLFVVMGMLLCLSAQFASS. Glutamine 25 bears the Pyrrolidone carboxylic acid mark. Glycine 34 carries the post-translational modification Glycine amide.

Belongs to the GnRH family. In terms of tissue distribution, olfactory bulbs, hypothalamus and telencephalon, midbrain and posterior brain areas.

Its subcellular location is the secreted. Functionally, stimulates the secretion of gonadotropins. This is Progonadoliberin IIA (gnrh2a) from Carassius auratus (Goldfish).